The chain runs to 904 residues: MLGLGYIGRKLFGTPNDRKVKRTRPLVAKINALEPAFEKLSDAEIVAKTRELQARAQAGESLDALLVEAFANCREAARRALGLRAFDTQLMGGIFLHQGNIAEMKTGEGKTLVATFPAYLNALAGKGVHIVTVNDYLARRDSEWMGKVYRHLGLTCGVVYPFQPDDEKRAAYGADITYATNNELGFDYLRDNMKSSVAEMYQRDHFFAIVDEVDSILIDEARTPLIISGPSQDRSDMYRTLDAYIPFLTEEHYKLDEKQRNATFTEEGNEFLEQKLQADGLLPEGQSLYDPESTTIVHHIGQALRAHKLFFKDQNYVVTDDEIVLIDEFTGRMMKGRRLSDGLHQAIEAKERVTIQPENVTLASVTFQNYFRLYEKLAGMTGTAVTEAEEFGDIYKLGVVEVPTNRPVARKDEHDRVYRTAKEKYAAVIEAIKTAHEKGQPTLVGTTSIEKSEMLSEMLKAEGLPHNVLNARQHEQEAQIVADAGRLGAITIATNMAGRGTDIQLGGNVEMKVQEEIAANPEAAPEEIRARIEAEHAAEKQKVIEAGGLFVLATERHESRRIDNQLRGRSGRQGDPGRSLFFLSLEDDLMRIFGSDRLEGVLSKLGMKEGEAIIHPWVNKSLERAQAKVEGRNFDWRKQLLKFDDVMNDQRKAVFGQRREIMETDEISEIVADMRQQVIDDLIDDFAPPKSYVDQWDIEGMRAAFIDHAGVDLPLADWAAEEGVDQDVLRERVTAALDAVMAQKTEAFGAETMRVIEKQILLQTIDAKWREHLVTLEHLRSVVGFRGYAQRDPLSEYKTESFQLFESMLDSLRYEVTKRLGQIRPMSDEERAEMLRQQAAALAAAEGAADPAEAPAPQPAAQVALAAAPGFVESDPTTWGEPSRNDPCPCGSGEKFKHCHGRLA.

Residues glutamine 89, glycine 107–threonine 111, and aspartate 502 each bind ATP. Positions valine 872 to serine 892 are disordered. Residues cysteine 888, cysteine 890, cysteine 899, and histidine 900 each coordinate Zn(2+).

Belongs to the SecA family. As to quaternary structure, part of the essential protein translocation apparatus which comprises SecA, SecYEG and auxiliary proteins SecDF-YajC and YidC. Homodimer. The cofactor is Zn(2+).

The protein resides in the cell inner membrane. It localises to the cytoplasm. It carries out the reaction ATP + H2O + cellular proteinSide 1 = ADP + phosphate + cellular proteinSide 2.. Part of the Sec protein translocase complex. Interacts with the SecYEG preprotein conducting channel. Has a central role in coupling the hydrolysis of ATP to the transfer of proteins into and across the cell membrane, serving both as a receptor for the preprotein-SecB complex and as an ATP-driven molecular motor driving the stepwise translocation of polypeptide chains across the membrane. The polypeptide is Protein translocase subunit SecA (Rhodobacter capsulatus (Rhodopseudomonas capsulata)).